The following is a 393-amino-acid chain: S-adenosylmethionine synthase (393 aa).

H16 serves as a coordination point for ATP. D18 is a Mg(2+) binding site. E44 provides a ligand contact to K(+). Residues E57 and Q100 each contribute to the L-methionine site. Residues 100-110 form a flexible loop region; it reads QSQDIAQGVDK. Residues 167 to 169, 238 to 239, D247, 253 to 254, A270, and K274 each bind ATP; these read DAK, RF, and RK. D247 is a binding site for L-methionine. K278 is a binding site for L-methionine.

Belongs to the AdoMet synthase family. In terms of assembly, homotetramer; dimer of dimers. Requires Mg(2+) as cofactor. K(+) is required as a cofactor.

It is found in the cytoplasm. The enzyme catalyses L-methionine + ATP + H2O = S-adenosyl-L-methionine + phosphate + diphosphate. The protein operates within amino-acid biosynthesis; S-adenosyl-L-methionine biosynthesis; S-adenosyl-L-methionine from L-methionine: step 1/1. Its function is as follows. Catalyzes the formation of S-adenosylmethionine (AdoMet) from methionine and ATP. The overall synthetic reaction is composed of two sequential steps, AdoMet formation and the subsequent tripolyphosphate hydrolysis which occurs prior to release of AdoMet from the enzyme. In Delftia acidovorans (strain DSM 14801 / SPH-1), this protein is S-adenosylmethionine synthase.